We begin with the raw amino-acid sequence, 294 residues long: Glycine--tRNA ligase alpha subunit (294 aa).

This sequence belongs to the class-II aminoacyl-tRNA synthetase family. Tetramer of two alpha and two beta subunits.

It is found in the cytoplasm. The catalysed reaction is tRNA(Gly) + glycine + ATP = glycyl-tRNA(Gly) + AMP + diphosphate. The protein is Glycine--tRNA ligase alpha subunit of Nostoc sp. (strain PCC 7120 / SAG 25.82 / UTEX 2576).